The primary structure comprises 295 residues: Sulfotransferase 1A1 (295 aa).

48–53 (KSGTTW) contributes to the 3'-phosphoadenylyl sulfate binding site. Residue 106–108 (KTH) participates in substrate binding. H108 functions as the Proton acceptor in the catalytic mechanism. 3'-phosphoadenylyl sulfate is bound by residues R130, S138, Y193, 227 to 232 (TSFKEM), and 255 to 259 (FMRKG). S138 bears the Phosphoserine mark.

The protein belongs to the sulfotransferase 1 family. In terms of assembly, homodimer. Distal lung parenchyma.

The protein resides in the cytoplasm. The enzyme catalyses a phenol + 3'-phosphoadenylyl sulfate = an aryl sulfate + adenosine 3',5'-bisphosphate + H(+). It catalyses the reaction 17beta-estradiol + 3'-phosphoadenylyl sulfate = 17beta-estradiol 3-sulfate + adenosine 3',5'-bisphosphate + H(+). It carries out the reaction 4-ethylphenol + 3'-phosphoadenylyl sulfate = 4-ethylphenyl sulfate + adenosine 3',5'-bisphosphate + H(+). The catalysed reaction is 4-nitrophenol + 3'-phosphoadenylyl sulfate = 4-nitrophenyl sulfate + adenosine 3',5'-bisphosphate. The enzyme catalyses dopamine + 3'-phosphoadenylyl sulfate = dopamine 3-O-sulfate + adenosine 3',5'-bisphosphate + H(+). It catalyses the reaction dopamine + 3'-phosphoadenylyl sulfate = dopamine 4-O-sulfate + adenosine 3',5'-bisphosphate + H(+). It carries out the reaction 3,3',5-triiodo-L-thyronine + 3'-phosphoadenylyl sulfate = 3,3',5-triiodo-L-thyronine sulfate + adenosine 3',5'-bisphosphate + H(+). The catalysed reaction is 3,3',5'-triiodo-L-thyronine + 3'-phosphoadenylyl sulfate = 3,3',5'-triiodo-L-thyronine sulfate + adenosine 3',5'-bisphosphate + H(+). The enzyme catalyses 3,3'-diiodo-L-thyronine + 3'-phosphoadenylyl sulfate = 3,3'-diiodo-L-thyronine sulfate + adenosine 3',5'-bisphosphate + H(+). It catalyses the reaction L-thyroxine + 3'-phosphoadenylyl sulfate = L-thyroxine sulfate + adenosine 3',5'-bisphosphate + H(+). Functionally, sulfotransferase that utilizes 3'-phospho-5'-adenylyl sulfate (PAPS) as sulfonate donor to catalyze the sulfate conjugation of a wide variety of acceptor molecules bearing a hydroxyl or an amine group. Sulfonation increases the water solubility of most compounds, and therefore their renal excretion, but it can also result in bioactivation to form active metabolites. Displays broad substrate specificity for small phenolic compounds. Plays an important role in the sulfonation of endogenous molecules such as steroid hormones. Mediates also the metabolic activation of carcinogenic N-hydroxyarylamines leading to highly reactive intermediates capable of forming DNA adducts, potentially resulting in mutagenesis. May play a role in gut microbiota-host metabolic interaction. O-sulfonates 4-ethylphenol (4-EP), a dietary tyrosine-derived metabolite produced by gut bacteria. The product 4-EPS crosses the blood-brain barrier and may negatively regulate oligodendrocyte maturation and myelination, affecting the functional connectivity of different brain regions associated with the limbic system. Catalyzes the sulfate conjugation of dopamine. Catalyzes the sulfation of T4 (L-thyroxine/3,5,3',5'-tetraiodothyronine), T3 (3,5,3'-triiodothyronine), rT3 (3,3',5'-triiodothyronine) and 3,3'-T2 (3,3'-diiodothyronine), with a substrate preference of 3,3'-T2 &gt; rT3 &gt; T3 &gt; T4. The sequence is that of Sulfotransferase 1A1 (SULT1A1) from Bos taurus (Bovine).